The primary structure comprises 497 residues: MEKQVDVLIIGAGISGIGLAVHLSKNCPQRKFEILERRESFGGTWDLFRYPGIRSDSDMSTFGFNFKPWAKDKVLASGAEIKGYLSDVISENQLKDKIHFGHRVLSANYDSTKKKWLVEIEDNNKKKQTWSANFVMGCTGYYNYDQGYAPKFPKQEDFKGQFIHPQHWPENLDYTGKKVVIIGSGATAITLVPSMVKGGAGHVTMLQRSPTYIATIPSIDFIYEKTRKFMSEETAYKFTRARNIGMQRGIYALAQKYPKTVRRLLLKGIELQLKGKVDMKHFTPSYNPWDQRLCVVPDGDLFKALREGQASVETDQIEKFTANGIQLKSGKHLEADIVISATGLEIQILGGVQGSIDGKPMNTSQHMLYQGVMVSDVPNMAMIIGYINASWTLKVDIAADYICRLINHMDKNGFDEVIAHADPSQRENDTIMGKMSSGYIARAADVMPKQGKQAPWKITNNYLADRKELKDAKFNDGVLEFHKRGEQTANRKPKLVS.

The chain crosses the membrane as a helical span at residues 4–24; it reads QVDVLIIGAGISGIGLAVHLS. 5 residues coordinate FAD: S15, E36, D56, F62, and V104. An NADP(+)-binding site is contributed by 54–56; it reads RSD. NADP(+) contacts are provided by residues 184 to 190, 208 to 209, and 292 to 293; these read SGATAIT, RS, and RL. Residue V395 participates in FAD binding.

Belongs to the FAD-binding monooxygenase family. It depends on FAD as a cofactor.

The protein resides in the cell membrane. The protein operates within hydrocarbon metabolism; alkane degradation. Is involved in the degradation of n-alkanes with C chain lengths of 32 and longer. Allows Acinetobacter sp. strain DSM 17874 to grow on long-chain n-alkanes such as dotriacontane (C32H66) or hexatriacontane (C36H74) as a sole carbon source. The chain is Probable FAD-binding monooxygenase AlmA from Acinetobacter sp.